The sequence spans 998 residues: Beta-galactosidase (998 aa).

The active-site Proton donor is Glu431. The active-site Nucleophile is Glu508.

Belongs to the glycosyl hydrolase 2 family.

The enzyme catalyses Hydrolysis of terminal non-reducing beta-D-galactose residues in beta-D-galactosides.. The sequence is that of Beta-galactosidase (lacZ) from Lactococcus lactis subsp. lactis (strain IL1403) (Streptococcus lactis).